We begin with the raw amino-acid sequence, 353 residues long: Vomeronasal type-1 receptor 1 (353 aa).

Over 1 to 56 the chain is Extracellular; it reads MVGDTLKLLSPLMTRYFFLLFYSTDSSDLNENQHPLDFDEMAFGKVKSGISFLIQT. The chain crosses the membrane as a helical span at residues 57–77; the sequence is GVGILGNSFLLCFYNLILFTG. Residues 78–84 lie on the Cytoplasmic side of the membrane; the sequence is HKLRPTD. A helical membrane pass occupies residues 85-105; the sequence is LILSQLALANSMVLFFKGIPQ. Residues 106–132 are Extracellular-facing; that stretch reads TMAAFGLKYLLNDTGCKFVFYYHRVGT. Residue asparagine 117 is glycosylated (N-linked (GlcNAc...) asparagine). A helical membrane pass occupies residues 133–153; sequence RVSLSTICLLNGFQAIKLNPS. Residues 154-169 lie on the Cytoplasmic side of the membrane; the sequence is ICRWMEIKIRSPRFID. A helical membrane pass occupies residues 170–190; it reads FCCLLCWAPHVLMNASVLLLV. Residues 191 to 226 are Extracellular-facing; the sequence is NGPLNSKNSSAKNNYGYCSYKASKRFSSLHAVLYFS. N-linked (GlcNAc...) asparagine glycosylation is present at asparagine 198. Residues 227–247 form a helical membrane-spanning segment; the sequence is PDFMSLGFMVWASGSMVFFLY. The Cytoplasmic portion of the chain corresponds to 248 to 274; it reads RHKQQVQHNHSNRLSCRPSQEARATHT. Residues 275–295 form a helical membrane-spanning segment; sequence IMVLVSSFFVFYSVHSFLTIW. Residues 296 to 303 are Extracellular-facing; it reads TTVVANPG. The chain crosses the membrane as a helical span at residues 304 to 324; it reads QWIVTNSVLVASCFPARSPFV. Residues 325-353 lie on the Cytoplasmic side of the membrane; sequence LIMSDTHISQFCFACRTRKTLFPNLVVMP.

Belongs to the G-protein coupled receptor 1 family. As to expression, expressed in the olfactory mucosa, very low expression in brain, lung and kidney.

It localises to the cell membrane. In terms of biological role, putative pheromone receptor. The polypeptide is Vomeronasal type-1 receptor 1 (VN1R1) (Homo sapiens (Human)).